A 239-amino-acid polypeptide reads, in one-letter code: Guanylate kinase (239 aa).

The 181-residue stretch at Gly55–Leu235 folds into the Guanylate kinase-like domain. Residue Gly62–Ser69 coordinates ATP.

The protein belongs to the guanylate kinase family.

Its subcellular location is the cytoplasm. It catalyses the reaction GMP + ATP = GDP + ADP. Functionally, essential for recycling GMP and indirectly, cGMP. The chain is Guanylate kinase (gmk) from Mycoplasma pneumoniae (strain ATCC 29342 / M129 / Subtype 1) (Mycoplasmoides pneumoniae).